The following is a 26-amino-acid chain: Hemocyanin subunit 5 (26 aa).

It belongs to the tyrosinase family. Hemocyanin subfamily. As to expression, hemolymph.

It is found in the secreted. The protein localises to the extracellular space. Its function is as follows. Hemocyanins are copper-containing oxygen carriers occurring freely dissolved in the hemolymph of many mollusks and arthropods. This Maja squinado (Mediterranean spider crab) protein is Hemocyanin subunit 5.